Reading from the N-terminus, the 430-residue chain is Trigger factor (430 aa).

The 86-residue stretch at 157-242 folds into the PPIase FKBP-type domain; sequence GDLVALETWS…AVEVSEPVLP (86 aa).

The protein belongs to the FKBP-type PPIase family. Tig subfamily.

It localises to the cytoplasm. It carries out the reaction [protein]-peptidylproline (omega=180) = [protein]-peptidylproline (omega=0). Its function is as follows. Involved in protein export. Acts as a chaperone by maintaining the newly synthesized protein in an open conformation. Functions as a peptidyl-prolyl cis-trans isomerase. The chain is Trigger factor from Xanthomonas oryzae pv. oryzae (strain MAFF 311018).